The sequence spans 92 residues: MVENVVYPAYFDADRSRSEGRRVPMDLAIEEPTVDEIAKAVQQVGYDAVIEREKTYSREFKPRGAVVVRGTEDTAKNDLVQAIAAYLGVIRE.

The protein belongs to the SRP19 family. As to quaternary structure, part of the signal recognition particle protein translocation system, which is composed of SRP and FtsY. Archaeal SRP consists of a 7S RNA molecule of 300 nucleotides and two protein subunits: SRP54 and SRP19.

The protein localises to the cytoplasm. In terms of biological role, involved in targeting and insertion of nascent membrane proteins into the cytoplasmic membrane. Binds directly to 7S RNA and mediates binding of the 54 kDa subunit of the SRP. The protein is Signal recognition particle 19 kDa protein of Halorubrum lacusprofundi (strain ATCC 49239 / DSM 5036 / JCM 8891 / ACAM 34).